Reading from the N-terminus, the 143-residue chain is Hemoglobin subunit alpha-2 (143 aa).

An N-acetylserine modification is found at Ser-2. One can recognise a Globin domain in the interval 2–143; sequence SLSAKDKATV…LALALSEKYR (142 aa). His-60 contributes to the O2 binding site. His-89 contributes to the heme b binding site.

The protein belongs to the globin family. In terms of assembly, hb 2 is a heterotetramer of two alpha-2 and two beta-1 chains. Hb 3 is a heterotetramer of two alpha-2 and two beta-2 chains. As to expression, red blood cells.

Functionally, involved in oxygen transport from gills to the various peripheral tissues. This is Hemoglobin subunit alpha-2 (hba2) from Boreogadus saida (Polar cod).